Reading from the N-terminus, the 908-residue chain is MADKTVKELADMVSKTASAVQQQLVDAGLPARAEGDLVTELEQEKLVTYLKQSHGQEEKRRISLKSKTTSTARVTGSSGKSKSVNVEVRKKKVFEKPDPEKMAEELAAREQAMIESQARAAKDAEDRAATKKKSEERQAATLAAMRASLGSSKKSDDKNDDISTSVVVKKGGKTTIEVKPKEQPKKKVAATKPKVETAVERKAREVREKEEARLREIETETRRTQAEEAQKRTLEQMRKMAGQYTDQPATEVRKDEPLAEGLVGDALEESFEKERREIKRGTSSTTARGRGRRKNQDEREIKNRKNGLRSSQSAQHKFEKPVEKIVYDVEISEQITVSDLAQRMAVKAREVTKLLMKMGEIARESDTIDQATASLIVEEMGHNPVPVSDTKVEDDLQDAADERSSNVQTRPPVVTIMGHVDHGKTSLLDKIRETKVATGEAGGITQHIGAYHVKTARGVITFLDTPGHAAFSAMRSRGAQATDIVVLVVAADDGMMPQTEEAIDHARAAGTPLIVAINKMDKPSADPDRVLNELTAKEVVSEEWGGDTPMARISAKTGDGIDELLELISLQAELMELEAPLDGPAQGVVIESRLEKGRGPVVSVLVKKGTLKQGDLVLAGEHYGKVRAMTDEHGQRIQSAGPSIPVEILGLPETPAAGSEFLVLTDEKKAREVADFRTNRERERQLERQNAMRLESMFDQMEQGNVSYLNIVLKTDVRGSLEALLSALNELSTDEVKVRVISSGVGPISESDVTLAESSEAVLLGFNVRADATARRKSDTANMDIRYYSVIYGLIDDVKAAMSGMLAPEHREKILGVADVREVFRSSKFGAAAGCMVVEGTIYRNKPIRVLRNDQVIFTGQLQSLRRYKEDVNEVRTGMECGLAVRGYDVEAGDKIEVFEIQEFARTI.

Disordered stretches follow at residues 52–229 (QSHG…AEEA) and 241–316 (AGQY…SAQH). Polar residues predominate over residues 65–84 (KSKTTSTARVTGSSGKSKSV). Basic and acidic residues-rich tracts occupy residues 94-108 (FEKP…ELAA), 120-138 (AAKD…EERQ), 176-185 (IEVKPKEQPK), 193-229 (PKVE…AEEA), 270-280 (SFEKERREIKR), and 294-303 (KNQDEREIKN). In terms of domain architecture, tr-type G spans 409–578 (TRPPVVTIMG…SLQAELMELE (170 aa)). Positions 418 to 425 (GHVDHGKT) are G1. GTP is bound at residue 418-425 (GHVDHGKT). A G2 region spans residues 443–447 (GITQH). Positions 464–467 (DTPG) are G3. GTP is bound by residues 464–468 (DTPGH) and 518–521 (NKMD). The interval 518 to 521 (NKMD) is G4. The segment at 554 to 556 (SAK) is G5.

Belongs to the TRAFAC class translation factor GTPase superfamily. Classic translation factor GTPase family. IF-2 subfamily.

It is found in the cytoplasm. Its function is as follows. One of the essential components for the initiation of protein synthesis. Protects formylmethionyl-tRNA from spontaneous hydrolysis and promotes its binding to the 30S ribosomal subunits. Also involved in the hydrolysis of GTP during the formation of the 70S ribosomal complex. The sequence is that of Translation initiation factor IF-2 from Psychrobacter arcticus (strain DSM 17307 / VKM B-2377 / 273-4).